The primary structure comprises 729 residues: 1,4-alpha-glucan branching enzyme GlgB (729 aa).

Asp408 acts as the Nucleophile in catalysis. The active-site Proton donor is the Glu461.

Belongs to the glycosyl hydrolase 13 family. GlgB subfamily. Monomer.

The catalysed reaction is Transfers a segment of a (1-&gt;4)-alpha-D-glucan chain to a primary hydroxy group in a similar glucan chain.. It participates in glycan biosynthesis; glycogen biosynthesis. Its function is as follows. Catalyzes the formation of the alpha-1,6-glucosidic linkages in glycogen by scission of a 1,4-alpha-linked oligosaccharide from growing alpha-1,4-glucan chains and the subsequent attachment of the oligosaccharide to the alpha-1,6 position. The polypeptide is 1,4-alpha-glucan branching enzyme GlgB (Vibrio cholerae serotype O1 (strain ATCC 39315 / El Tor Inaba N16961)).